The chain runs to 165 residues: Neurotrophin-3 (165 aa).

Residues 1–3 (IQS) form the signal peptide. The propeptide occupies 4-119 (TSMDQGSLSE…VLNRTSRRKR (116 aa)). Residues 32–61 (KVPKQAARTKDGTQTTAKKTEAEPEATANK) are disordered. N-linked (GlcNAc...) asparagine glycosylation occurs at asparagine 112.

This sequence belongs to the NGF-beta family.

The protein localises to the secreted. Functionally, seems to promote the survival of visceral and proprioceptive sensory neurons. This is Neurotrophin-3 (NTF3) from Xenopeltis unicolor (Sunbeam snake).